A 129-amino-acid polypeptide reads, in one-letter code: Large ribosomal subunit protein bL12 (129 aa).

Belongs to the bacterial ribosomal protein bL12 family. As to quaternary structure, homodimer. Part of the ribosomal stalk of the 50S ribosomal subunit. Forms a multimeric L10(L12)X complex, where L10 forms an elongated spine to which 2 to 4 L12 dimers bind in a sequential fashion. Binds GTP-bound translation factors.

Its function is as follows. Forms part of the ribosomal stalk which helps the ribosome interact with GTP-bound translation factors. Is thus essential for accurate translation. The protein is Large ribosomal subunit protein bL12 of Treponema pallidum (strain Nichols).